An 838-amino-acid polypeptide reads, in one-letter code: Protein kintoun (838 aa).

5 disordered regions span residues 106–125, 212–238, 370–411, 557–696, and 776–838; these read RPKN…LNWS, NPTA…GKPE, LRHF…TSSP, NAPL…DSCS, and QQRR…EMDD. Polar residues predominate over residues 114 to 125; sequence DPSSGSRGLNWS. Over residues 370-380 the composition is skewed to basic and acidic residues; the sequence is LRHFSREDSGV. At Ser-378 the chain carries Phosphoserine. The segment covering 389–398 has biased composition (acidic residues); it reads PVEEDPDGEL. Residues 557–572 are compositionally biased toward basic and acidic residues; it reads NAPLDVEFERNQEGHA. Acidic residues predominate over residues 583-592; the sequence is EEEEEEEDKE. Over residues 601–611 the composition is skewed to low complexity; that stretch reads DQQQQQQVQNK. Basic residues-rich tracts occupy residues 612-623 and 673-683; these read KSGKKQRKRNKK and RSHRGILKRFS. Ser-781 is modified (phosphoserine). Residues 789–802 show a composition bias toward basic and acidic residues; the sequence is EETRGSALKQKENP.

This sequence belongs to the PIH1 family. Kintoun subfamily. Interacts with Pp1alpha-96A, Pp1-87B, Pp1-13C and flw.

It is found in the cytoplasm. In terms of biological role, required for cytoplasmic pre-assembly of axonemal dyneins, thereby playing a central role in motility in cilia and flagella. Involved in pre-assembly of dynein arm complexes in the cytoplasm before intraflagellar transport loads them for the ciliary compartment. This Drosophila sechellia (Fruit fly) protein is Protein kintoun.